The following is a 591-amino-acid chain: L-fucose isomerase (591 aa).

Active-site proton acceptor residues include E337 and D361. Residues E337, D361, and H528 each contribute to the Mn(2+) site.

It belongs to the L-fucose isomerase family. In terms of assembly, homohexamer. Mn(2+) serves as cofactor.

It localises to the cytoplasm. It carries out the reaction L-fucose = L-fuculose. The protein operates within carbohydrate degradation; L-fucose degradation; L-lactaldehyde and glycerone phosphate from L-fucose: step 1/3. In terms of biological role, converts the aldose L-fucose into the corresponding ketose L-fuculose. The chain is L-fucose isomerase from Escherichia coli O6:H1 (strain CFT073 / ATCC 700928 / UPEC).